The chain runs to 809 residues: LPS-assembly protein LptD (809 aa).

The first 22 residues, 1–22 (MRRALRLLPLPLSIAICLPAMA), serve as a signal peptide directing secretion.

This sequence belongs to the LptD family. Component of the lipopolysaccharide transport and assembly complex. Interacts with LptE and LptA.

Its subcellular location is the cell outer membrane. Together with LptE, is involved in the assembly of lipopolysaccharide (LPS) at the surface of the outer membrane. The polypeptide is LPS-assembly protein LptD (Xanthomonas campestris pv. campestris (strain 8004)).